The chain runs to 1195 residues: ATP-dependent DNA helicase Hel308 (1195 aa).

Residues Q20 and I39–T46 each bind ATP. The 171-residue stretch at R26–D196 folds into the Helicase ATP-binding domain. The short motif at D143 to H146 is the DEAH box element. The DOD-type homing endonuclease domain maps to F451–I584.

Belongs to the helicase family. Hel308 subfamily. In terms of assembly, monomer. This protein undergoes a protein self splicing that involves a post-translational excision of the intervening region (intein) followed by peptide ligation.

It carries out the reaction Couples ATP hydrolysis with the unwinding of duplex DNA by translocating in the 3'-5' direction.. It catalyses the reaction ATP + H2O = ADP + phosphate + H(+). Its function is as follows. DNA-dependent ATPase and 3'-5' DNA helicase that may be involved in repair of stalled replication forks. The chain is ATP-dependent DNA helicase Hel308 from Methanocaldococcus jannaschii (strain ATCC 43067 / DSM 2661 / JAL-1 / JCM 10045 / NBRC 100440) (Methanococcus jannaschii).